A 424-amino-acid chain; its full sequence is Enolase (424 aa).

Glutamine 162 provides a ligand contact to (2R)-2-phosphoglycerate. Glutamate 204 serves as the catalytic Proton donor. Positions 241, 284, and 311 each coordinate Mg(2+). 4 residues coordinate (2R)-2-phosphoglycerate: lysine 336, arginine 365, serine 366, and lysine 387. Lysine 336 (proton acceptor) is an active-site residue.

This sequence belongs to the enolase family. Requires Mg(2+) as cofactor.

It is found in the cytoplasm. Its subcellular location is the secreted. The protein resides in the cell surface. It carries out the reaction (2R)-2-phosphoglycerate = phosphoenolpyruvate + H2O. The protein operates within carbohydrate degradation; glycolysis; pyruvate from D-glyceraldehyde 3-phosphate: step 4/5. In terms of biological role, catalyzes the reversible conversion of 2-phosphoglycerate (2-PG) into phosphoenolpyruvate (PEP). It is essential for the degradation of carbohydrates via glycolysis. This chain is Enolase, found in Agrobacterium fabrum (strain C58 / ATCC 33970) (Agrobacterium tumefaciens (strain C58)).